We begin with the raw amino-acid sequence, 150 residues long: Mediator of RNA polymerase II transcription subunit 22a (150 aa).

Residues 99 to 127 (SLNDHVEQRIAEFDQEAEKTNRLLARIAD) are a coiled coil.

The protein belongs to the Mediator complex subunit 22 family. Component of the Mediator complex.

It localises to the nucleus. In terms of biological role, component of the Mediator complex, a coactivator involved in the regulated transcription of nearly all RNA polymerase II-dependent genes. Mediator functions as a bridge to convey information from gene-specific regulatory proteins to the basal RNA polymerase II transcription machinery. The Mediator complex, having a compact conformation in its free form, is recruited to promoters by direct interactions with regulatory proteins and serves for the assembly of a functional preinitiation complex with RNA polymerase II and the general transcription factors. In Arabidopsis thaliana (Mouse-ear cress), this protein is Mediator of RNA polymerase II transcription subunit 22a (MED22A).